The sequence spans 234 residues: Purine nucleoside phosphorylase DeoD-type (234 aa).

Residue His4 coordinates a purine D-ribonucleoside. Residues Gly20, Arg24, Arg43, and 87-90 each bind phosphate; that span reads RIGS. Residues Glu162, 179 to 181, and 203 to 204 contribute to the a purine D-ribonucleoside site; these read EME and SD. Asp204 functions as the Proton donor in the catalytic mechanism.

Belongs to the PNP/UDP phosphorylase family. As to quaternary structure, homohexamer; trimer of homodimers.

It catalyses the reaction a purine D-ribonucleoside + phosphate = a purine nucleobase + alpha-D-ribose 1-phosphate. The catalysed reaction is a purine 2'-deoxy-D-ribonucleoside + phosphate = a purine nucleobase + 2-deoxy-alpha-D-ribose 1-phosphate. In terms of biological role, catalyzes the reversible phosphorolytic breakdown of the N-glycosidic bond in the beta-(deoxy)ribonucleoside molecules, with the formation of the corresponding free purine bases and pentose-1-phosphate. The polypeptide is Purine nucleoside phosphorylase DeoD-type (Roseobacter denitrificans (strain ATCC 33942 / OCh 114) (Erythrobacter sp. (strain OCh 114))).